A 474-amino-acid polypeptide reads, in one-letter code: 3-isopropylmalate dehydratase large subunit (474 aa).

Residues C352, C413, and C416 each coordinate [4Fe-4S] cluster.

Belongs to the aconitase/IPM isomerase family. LeuC type 1 subfamily. As to quaternary structure, heterodimer of LeuC and LeuD. The cofactor is [4Fe-4S] cluster.

It carries out the reaction (2R,3S)-3-isopropylmalate = (2S)-2-isopropylmalate. It functions in the pathway amino-acid biosynthesis; L-leucine biosynthesis; L-leucine from 3-methyl-2-oxobutanoate: step 2/4. Its function is as follows. Catalyzes the isomerization between 2-isopropylmalate and 3-isopropylmalate, via the formation of 2-isopropylmaleate. This is 3-isopropylmalate dehydratase large subunit from Pseudomonas savastanoi pv. phaseolicola (strain 1448A / Race 6) (Pseudomonas syringae pv. phaseolicola (strain 1448A / Race 6)).